Consider the following 825-residue polypeptide: MFSGFNVFRVGISFVIMCIFYMPTVNSLPELSPQKYFSTLQPGKASLAYFCQADSPRTSVFLEELNEAVRPLQDYGISVAKVNCVKEEISRYCGKEKDLMKAYLFKGNILLREFPTDTLFDVNAIVAHVLFALLFSEVKYITNLEDLQNIENALKGKANIIFSYVRAIGIPEHRAVMEAAFVYGTTYQFVLTTEIALLESIGSEDVEYAHLYFFHCKLVLDLTQQCRRTLMEQPLTTLNIHLFIKTMKAPLLTEVAEDPQQVSTVHLQLGLPLVFIVSQQATYEADRRTAEWVAWRLLGKAGVLLLLRDSLEVNIPQDANVVFKRAEEGVPVEFLVLHDVDLIISHVENNMHIEEIQEDEDNDMEGPDIDVQDDEVAETVFRDRKRKLPLELTVELTEETFNATVMASDSIVLFYAGWQAVSMAFLQSYIDVAVKLKGTSTMLLTRINCADWSDVCTKQNVTEFPIIKMYKKGENPVSYAGMLGTEDLLKFIQLNRISYPVNITSIQEAEEYLSGELYKDLILYSSVSVLGLFSPTMKTAKEDFSEAGNYLKGYVITGIYSEEDVLLLSTKYAASLPALLLARHTEGKIESIPLASTHAQDIVQIITDALLEMFPEITVENLPSYFRLQKPLLILFSDGTVNPQYKKAILTLVKQKYLDSFTPCWLNLKNTPVGRGILRAYFDPLPPLPLLVLVNLHSGGQVFAFPSDQAIIEENLVLWLKKLEAGLENHITILPAQEWKPPLPAYDFLSMIDAATSQRGTRKVPKCMKETDVQENDKEQHEDKSAVRKEPIETLRIKHWNRSNWFKEAEKSFRRDKELGCSKVN.

The N-terminal stretch at 1–27 (MFSGFNVFRVGISFVIMCIFYMPTVNS) is a signal peptide. One can recognise a Thioredoxin domain in the interval 392–495 (LTVELTEETF…EDLLKFIQLN (104 aa)). Cys-449 and Cys-456 form a disulfide bridge. Asn-460 carries an N-linked (GlcNAc...) asparagine glycan. The interval 762–787 (RKVPKCMKETDVQENDKEQHEDKSAV) is disordered. Residues 767-787 (CMKETDVQENDKEQHEDKSAV) are compositionally biased toward basic and acidic residues. The Mediates endoplasmic reticulum retention signature appears at 816-819 (DKEL).

In terms of assembly, interacts with FOXRED2. Glycosylated.

Its subcellular location is the secreted. It localises to the endoplasmic reticulum lumen. The polypeptide is Thioredoxin domain-containing protein 16 (Homo sapiens (Human)).